The primary structure comprises 332 residues: 1-acyl-sn-glycerol-3-phosphate acyltransferase CHLREDRAFT_174358 (332 aa).

Residues 96-116 (FLLSLPLFVTMMVMAPLVLAF) form a helical membrane-spanning segment. An HXXXXD motif motif is present at residues 163 to 168 (HQSFLD). Residues 185–205 (TSNFLIPIIGWSMFLTGHVMI) form a helical membrane-spanning segment. The EGTR motif signature appears at 235-238 (EGTR).

The protein belongs to the 1-acyl-sn-glycerol-3-phosphate acyltransferase family.

The protein localises to the membrane. The enzyme catalyses a 1-acyl-sn-glycero-3-phosphate + an acyl-CoA = a 1,2-diacyl-sn-glycero-3-phosphate + CoA. Its pathway is phospholipid metabolism; CDP-diacylglycerol biosynthesis; CDP-diacylglycerol from sn-glycerol 3-phosphate: step 2/3. In terms of biological role, converts lysophosphatidic acid (LPA) into phosphatidic acid by incorporating an acyl moiety at the sn-2 position of the glycerol backbone. The sequence is that of 1-acyl-sn-glycerol-3-phosphate acyltransferase CHLREDRAFT_174358 from Chlamydomonas reinhardtii (Chlamydomonas smithii).